Consider the following 629-residue polypeptide: Probable potassium transport system protein Kup 3 (629 aa).

Transmembrane regions (helical) follow at residues 20–40 (LSLS…LYTF), 54–74 (VTTI…IASV), 106–126 (PFII…GTIT), 143–163 (PSLK…LFAI), 171–191 (IGKA…ILGA), 212–232 (FLFS…LCAT), 253–273 (WFGL…ALVL), 291–311 (FLLP…QAII), 343–363 (IYIG…IIGF), 372–392 (AYGI…FIAL), 400–420 (IITS…FFAA), and 425–445 (FING…MMYI).

Belongs to the HAK/KUP transporter (TC 2.A.72) family.

The protein resides in the cell inner membrane. The enzyme catalyses K(+)(in) + H(+)(in) = K(+)(out) + H(+)(out). Its function is as follows. Transport of potassium into the cell. Likely operates as a K(+):H(+) symporter. This chain is Probable potassium transport system protein Kup 3, found in Legionella pneumophila (strain Paris).